Consider the following 505-residue polypeptide: Probable RNA exonuclease NGL3 (505 aa).

2 disordered regions span residues 1-75 and 334-369; these read MDSQ…FPTP and RNGEESDQDDEECDEKSRGEGHSDQPQNPKPESFTA. Over residues 10–23 the composition is skewed to polar residues; the sequence is SPSQKESSSTSGLV. Residues 36 to 54 are compositionally biased toward basic and acidic residues; sequence HRDQLSVDQIKKIREERAQ. Ser62 carries the post-translational modification Phosphoserine. The span at 338-347 shows a compositional bias: acidic residues; it reads ESDQDDEECD.

It belongs to the CCR4/nocturin family.

The chain is Probable RNA exonuclease NGL3 (NGL3) from Saccharomyces cerevisiae (strain ATCC 204508 / S288c) (Baker's yeast).